The chain runs to 544 residues: Chaperonin GroEL (544 aa).

Residues 29 to 32, 86 to 90, Gly-413, 476 to 478, and Asp-492 each bind ATP; these read TLGP, DGTTT, and NAL.

It belongs to the chaperonin (HSP60) family. As to quaternary structure, forms a cylinder of 14 subunits composed of two heptameric rings stacked back-to-back. Interacts with the co-chaperonin GroES.

The protein localises to the cytoplasm. It catalyses the reaction ATP + H2O + a folded polypeptide = ADP + phosphate + an unfolded polypeptide.. In terms of biological role, together with its co-chaperonin GroES, plays an essential role in assisting protein folding. The GroEL-GroES system forms a nano-cage that allows encapsulation of the non-native substrate proteins and provides a physical environment optimized to promote and accelerate protein folding. The sequence is that of Chaperonin GroEL from Desulfitobacterium hafniense (strain DSM 10664 / DCB-2).